The chain runs to 665 residues: Transketolase (665 aa).

His26 is a binding site for substrate. Residues His66 and Gly114–Leu116 each bind thiamine diphosphate. Residues Asn94–Gly114 form a disordered region. Residues Thr97–Gly114 show a composition bias toward low complexity. Asp155 contacts Mg(2+). Thiamine diphosphate contacts are provided by Gly156 and Asn185. The Mg(2+) site is built by Asn185 and Ile187. 3 residues coordinate substrate: His261, Arg358, and Ser385. His261 contacts thiamine diphosphate. The Proton donor role is filled by Glu411. Phe437 contributes to the thiamine diphosphate binding site. Substrate is bound by residues His461, Asp469, and Arg520.

Belongs to the transketolase family. In terms of assembly, homodimer. Mg(2+) is required as a cofactor. Requires Ca(2+) as cofactor. The cofactor is Mn(2+). It depends on Co(2+) as a cofactor. Thiamine diphosphate serves as cofactor.

The catalysed reaction is D-sedoheptulose 7-phosphate + D-glyceraldehyde 3-phosphate = aldehydo-D-ribose 5-phosphate + D-xylulose 5-phosphate. Its function is as follows. Catalyzes the transfer of a two-carbon ketol group from a ketose donor to an aldose acceptor, via a covalent intermediate with the cofactor thiamine pyrophosphate. The polypeptide is Transketolase (tkt) (Buchnera aphidicola subsp. Acyrthosiphon pisum (strain APS) (Acyrthosiphon pisum symbiotic bacterium)).